The sequence spans 234 residues: uncharacterized protein (234 aa).

Transmembrane regions (helical) follow at residues 20 to 40 (LILL…FKVI) and 176 to 196 (VMAF…LHFL).

The protein belongs to the CpsC/CapA family.

Its subcellular location is the cell membrane. This is an uncharacterized protein from Bacillus subtilis (strain 168).